The primary structure comprises 104 residues: Large ribosomal subunit protein uL24 (104 aa).

It belongs to the universal ribosomal protein uL24 family. Part of the 50S ribosomal subunit.

Functionally, one of two assembly initiator proteins, it binds directly to the 5'-end of the 23S rRNA, where it nucleates assembly of the 50S subunit. Its function is as follows. One of the proteins that surrounds the polypeptide exit tunnel on the outside of the subunit. The polypeptide is Large ribosomal subunit protein uL24 (Afipia carboxidovorans (strain ATCC 49405 / DSM 1227 / KCTC 32145 / OM5) (Oligotropha carboxidovorans)).